The primary structure comprises 472 residues: Threonine synthase-like 2 (472 aa).

N6-(pyridoxal phosphate)lysine is present on Lys-113.

The protein belongs to the threonine synthase family. Requires pyridoxal 5'-phosphate as cofactor.

Its function is as follows. Acts as a catabolic phospho-lyase on both gamma- and beta-phosphorylated substrates. Degrades O-phospho-threonine (PThr) to alpha-ketobutyrate, ammonia and phosphate. This is Threonine synthase-like 2 (thnsl2) from Xenopus laevis (African clawed frog).